Reading from the N-terminus, the 467-residue chain is Asparagine--tRNA ligase (467 aa).

The protein belongs to the class-II aminoacyl-tRNA synthetase family. As to quaternary structure, homodimer.

It localises to the cytoplasm. It carries out the reaction tRNA(Asn) + L-asparagine + ATP = L-asparaginyl-tRNA(Asn) + AMP + diphosphate + H(+). The sequence is that of Asparagine--tRNA ligase from Histophilus somni (strain 2336) (Haemophilus somnus).